Reading from the N-terminus, the 1022-residue chain is Sodium-dependent transporter snf-12 (1022 aa).

Over 1-165 (MNGEWKSALR…RRELWRTQKD (165 aa)) the chain is Cytoplasmic. A helical transmembrane segment spans residues 166 to 185 (FFLSCLGFMVGVGHTMRFPA). Residues 186 to 192 (KVYQHGG) are Extracellular-facing. A helical transmembrane segment spans residues 193 to 213 (GVFFIPYLFSLIFFGLPLVFL). Residues 214–241 (HLSLGQYTGQAANTAFQRLMPIGSGVGW) are Cytoplasmic-facing. A helical membrane pass occupies residues 242–262 (ALVVIAIPVAVYYNIIVAWAI). Over 263-337 (HYFFQSAKGL…DFALGPLQSH (75 aa)) the chain is Extracellular. The helical transmembrane segment at 338–358 (LVLSLAAAWLLVFFGVFKGLG) threads the bilayer. Ser359 is a topological domain (cytoplasmic). The chain crosses the membrane as a helical span at residues 360–380 (IAQTMNVTATVPYLLLSILLL). The Extracellular portion of the chain corresponds to 381 to 412 (RGISLPGANKGLTFLFTVDSTKLWKWQIWKSA). Residues 413–433 (AEQVFYELGIDAGPLISMAAF) traverse the membrane as a helical segment. Over 434–444 (SRYRNNIYRDS) the chain is Cytoplasmic. The chain crosses the membrane as a helical span at residues 445–465 (VLLVIMDALTSCLSGMVIFSF). Topologically, residues 466–498 (VGFIASESNSNVNDVLKHDPLYLSFTVYPGVTS) are extracellular. Residues 499–519 (FMYWGGLWATLFFGMLVLAAI) form a helical membrane-spanning segment. Residues 520-550 (DAEFAWLEMIASAFMNHFSMKNKAVENRLLA) are Cytoplasmic-facing. The helical transmembrane segment at 551 to 571 (FLCLAGFFLGLPLCAQGGIFV) threads the bilayer. Residues 572 to 584 (FHAIENLNANWNS) are Extracellular-facing. Residues 585-605 (FSLALLSVAIVCYVYGIDNYL) traverse the membrane as a helical segment. The Cytoplasmic portion of the chain corresponds to 606–641 (TDISAMLRVPRIQISKATRLKEKLIYFFGPGGIYIK). The chain crosses the membrane as a helical span at residues 642–662 (FSLCFICPVILTVLLVASVLG). At 663-677 (YQRISFAGRPIPIDY) the chain is on the extracellular side. Residues 678-698 (EIVAWIVMIGPLLVVPLVAFM) traverse the membrane as a helical segment. The Cytoplasmic portion of the chain corresponds to 699 to 1022 (QIRQIRNEGK…RPKPIDMPPK (324 aa)). 2 disordered regions span residues 867 to 948 (RIPN…SSDD) and 995 to 1022 (IYDQ…MPPK). Over residues 893–907 (SDPPVPTSPLPPPPK) the composition is skewed to pro residues. The span at 933–943 (DDSPSISNSSD) shows a compositional bias: low complexity.

It belongs to the sodium:neurotransmitter symporter (SNF) (TC 2.A.22) family. May interact with STAT family transcription factor sta-2; the interaction is probably direct.

The protein localises to the membrane. Its subcellular location is the cytoplasm. It is found in the vesicle. In terms of biological role, probably mediates sodium-dependent uptake of unknown small molecule(s). By positively modulating expression, in the epidermis, of antimicrobial peptides such as nlp-29, plays a role in resistance to fungal infection and in the response to physical wounding and phorbol ester PMA treatment. Role in response to wounding of the epidermis may be facilitated by recruitment of snf-12 to the wound site by microtubule-dependent vesicle trafficking. Functions cell autonomously in the epidermis, in concert with STAT transcription factor sta-2, probably acting at vesicular membranes, downstream of a p38 MAPK/pmk-1 pathway. This is Sodium-dependent transporter snf-12 from Caenorhabditis elegans.